A 242-amino-acid chain; its full sequence is Probable transcriptional regulatory protein Bxeno_A1185 (242 aa).

Belongs to the TACO1 family.

It is found in the cytoplasm. This Paraburkholderia xenovorans (strain LB400) protein is Probable transcriptional regulatory protein Bxeno_A1185.